We begin with the raw amino-acid sequence, 334 residues long: Glyceraldehyde-3-phosphate dehydrogenase (334 aa).

Residues 10 to 11 (RI), aspartate 33, lysine 77, and threonine 119 each bind NAD(+). Residues 149–151 (SCT), threonine 180, 209–210 (TG), and arginine 232 contribute to the D-glyceraldehyde 3-phosphate site. Cysteine 150 acts as the Nucleophile in catalysis. Position 314 (asparagine 314) interacts with NAD(+).

Belongs to the glyceraldehyde-3-phosphate dehydrogenase family. Homotetramer.

Its subcellular location is the cytoplasm. The enzyme catalyses D-glyceraldehyde 3-phosphate + phosphate + NAD(+) = (2R)-3-phospho-glyceroyl phosphate + NADH + H(+). It participates in carbohydrate degradation; glycolysis; pyruvate from D-glyceraldehyde 3-phosphate: step 1/5. In terms of biological role, catalyzes the oxidative phosphorylation of glyceraldehyde 3-phosphate (G3P) to 1,3-bisphosphoglycerate (BPG) using the cofactor NAD. The first reaction step involves the formation of a hemiacetal intermediate between G3P and a cysteine residue, and this hemiacetal intermediate is then oxidized to a thioester, with concomitant reduction of NAD to NADH. The reduced NADH is then exchanged with the second NAD, and the thioester is attacked by a nucleophilic inorganic phosphate to produce BPG. In Chlamydia trachomatis serovar D (strain ATCC VR-885 / DSM 19411 / UW-3/Cx), this protein is Glyceraldehyde-3-phosphate dehydrogenase (gap).